A 93-amino-acid polypeptide reads, in one-letter code: Envelope small membrane protein (93 aa).

At 1 to 11 the chain is on the virion surface side; sequence MMNLLNKSLEE. The helical transmembrane segment at 12–32 threads the bilayer; sequence NGSVLTAFYIFVAFVALYLLG. Over 33 to 93 the chain is Intravirion; it reads RALQAFVQAA…NEFPKNGWKQ (61 aa).

Belongs to the gammacoronaviruses E protein family. In terms of assembly, homooligomer. Interacts with the M membrane protein in the budding compartment of the host cell, which is located between endoplasmic reticulum and the Golgi complex. The cytoplasmic tails of both proteins are important for this function. Interacts with Nucleoprotein.

The protein resides in the host Golgi apparatus membrane. In terms of biological role, plays a central role in virus morphogenesis and assembly. Acts as a viroporin and self-assembles in host membranes forming pentameric protein-lipid pores that allow ion transport. Also plays a role in the induction of apoptosis. This chain is Envelope small membrane protein, found in Avian infectious bronchitis virus (strain Portugal/322/82) (IBV).